We begin with the raw amino-acid sequence, 118 residues long: Small ribosomal subunit protein uS13 (118 aa).

Positions Arg-93 to Arg-118 are disordered. Residues Ala-106–Arg-118 show a composition bias toward basic residues.

Belongs to the universal ribosomal protein uS13 family. Part of the 30S ribosomal subunit. Forms a loose heterodimer with protein S19. Forms two bridges to the 50S subunit in the 70S ribosome.

Functionally, located at the top of the head of the 30S subunit, it contacts several helices of the 16S rRNA. In the 70S ribosome it contacts the 23S rRNA (bridge B1a) and protein L5 of the 50S subunit (bridge B1b), connecting the 2 subunits; these bridges are implicated in subunit movement. Contacts the tRNAs in the A and P-sites. This chain is Small ribosomal subunit protein uS13, found in Psychrobacter cryohalolentis (strain ATCC BAA-1226 / DSM 17306 / VKM B-2378 / K5).